Reading from the N-terminus, the 252-residue chain is Thiazole synthase (252 aa).

Catalysis depends on lysine 91, which acts as the Schiff-base intermediate with DXP. 1-deoxy-D-xylulose 5-phosphate-binding positions include glycine 152, 179–180 (AG), and 201–202 (NT).

The protein belongs to the ThiG family. As to quaternary structure, homotetramer. Forms heterodimers with either ThiH or ThiS.

Its subcellular location is the cytoplasm. The enzyme catalyses [ThiS sulfur-carrier protein]-C-terminal-Gly-aminoethanethioate + 2-iminoacetate + 1-deoxy-D-xylulose 5-phosphate = [ThiS sulfur-carrier protein]-C-terminal Gly-Gly + 2-[(2R,5Z)-2-carboxy-4-methylthiazol-5(2H)-ylidene]ethyl phosphate + 2 H2O + H(+). It participates in cofactor biosynthesis; thiamine diphosphate biosynthesis. In terms of biological role, catalyzes the rearrangement of 1-deoxy-D-xylulose 5-phosphate (DXP) to produce the thiazole phosphate moiety of thiamine. Sulfur is provided by the thiocarboxylate moiety of the carrier protein ThiS. In vitro, sulfur can be provided by H(2)S. This is Thiazole synthase from Gluconobacter oxydans (strain 621H) (Gluconobacter suboxydans).